The primary structure comprises 501 residues: Lysine--tRNA ligase (501 aa).

Residues Glu404 and Glu411 each contribute to the Mg(2+) site.

The protein belongs to the class-II aminoacyl-tRNA synthetase family. As to quaternary structure, homodimer. The cofactor is Mg(2+).

Its subcellular location is the cytoplasm. It catalyses the reaction tRNA(Lys) + L-lysine + ATP = L-lysyl-tRNA(Lys) + AMP + diphosphate. This Campylobacter jejuni subsp. doylei (strain ATCC BAA-1458 / RM4099 / 269.97) protein is Lysine--tRNA ligase.